The primary structure comprises 523 residues: Probable aminopeptidase NPEPL1 (523 aa).

Residues K260 and D265 each coordinate Zn(2+). K272 is an active-site residue. Zn(2+) is bound by residues D283, D342, and E344. The active site involves R346.

The protein belongs to the peptidase M17 family. Zn(2+) is required as a cofactor. Requires Mn(2+) as cofactor. In terms of tissue distribution, ubiquitously expressed.

Its function is as follows. Probably catalyzes the removal of unsubstituted N-terminal amino acids from various peptides. The polypeptide is Probable aminopeptidase NPEPL1 (NPEPL1) (Homo sapiens (Human)).